The primary structure comprises 158 residues: Small ribosomal subunit protein uS7 (158 aa).

It belongs to the universal ribosomal protein uS7 family. Part of the 30S ribosomal subunit. Contacts proteins S9 and S11.

Functionally, one of the primary rRNA binding proteins, it binds directly to 16S rRNA where it nucleates assembly of the head domain of the 30S subunit. Is located at the subunit interface close to the decoding center, probably blocks exit of the E-site tRNA. This is Small ribosomal subunit protein uS7 from Wolbachia pipientis subsp. Culex pipiens (strain wPip).